A 160-amino-acid polypeptide reads, in one-letter code: Protein-export protein SecB (160 aa).

Belongs to the SecB family. As to quaternary structure, homotetramer, a dimer of dimers. One homotetramer interacts with 1 SecA dimer.

Its subcellular location is the cytoplasm. Functionally, one of the proteins required for the normal export of preproteins out of the cell cytoplasm. It is a molecular chaperone that binds to a subset of precursor proteins, maintaining them in a translocation-competent state. It also specifically binds to its receptor SecA. The chain is Protein-export protein SecB from Azorhizobium caulinodans (strain ATCC 43989 / DSM 5975 / JCM 20966 / LMG 6465 / NBRC 14845 / NCIMB 13405 / ORS 571).